Consider the following 178-residue polypeptide: Ribosomal RNA small subunit methyltransferase G (178 aa).

Residues glycine 54, leucine 59, 105-106 (LE), and arginine 120 contribute to the S-adenosyl-L-methionine site.

It belongs to the methyltransferase superfamily. RNA methyltransferase RsmG family.

The protein localises to the cytoplasm. It carries out the reaction guanosine(527) in 16S rRNA + S-adenosyl-L-methionine = N(7)-methylguanosine(527) in 16S rRNA + S-adenosyl-L-homocysteine. Functionally, specifically methylates the N7 position of guanine in position 527 of 16S rRNA. The chain is Ribosomal RNA small subunit methyltransferase G from Helicobacter pylori (strain ATCC 700392 / 26695) (Campylobacter pylori).